The following is a 465-amino-acid chain: Cysteine--tRNA ligase (465 aa).

Zn(2+) is bound at residue Cys-30. The 'HIGH' region signature appears at 32 to 42 (ITVYDYCHVGH). Residues Cys-214, His-239, and Glu-243 each coordinate Zn(2+). The 'KMSKS' region motif lies at 271 to 275 (KMSKS). Residue Lys-274 coordinates ATP.

This sequence belongs to the class-I aminoacyl-tRNA synthetase family. In terms of assembly, monomer. The cofactor is Zn(2+).

It is found in the cytoplasm. It carries out the reaction tRNA(Cys) + L-cysteine + ATP = L-cysteinyl-tRNA(Cys) + AMP + diphosphate. The protein is Cysteine--tRNA ligase of Burkholderia vietnamiensis (strain G4 / LMG 22486) (Burkholderia cepacia (strain R1808)).